The sequence spans 198 residues: Putative NADH dehydrogenase/NAD(P)H nitroreductase XOO4267 (198 aa).

It belongs to the nitroreductase family. HadB/RutE subfamily. FMN is required as a cofactor.

The chain is Putative NADH dehydrogenase/NAD(P)H nitroreductase XOO4267 from Xanthomonas oryzae pv. oryzae (strain KACC10331 / KXO85).